A 105-amino-acid chain; its full sequence is Large ribosomal subunit protein uL24 (105 aa).

Residues 1-25 form a disordered region; it reads MHIKKGDNVKVIAGKDKGKEGKVVS.

This sequence belongs to the universal ribosomal protein uL24 family. Part of the 50S ribosomal subunit.

Functionally, one of two assembly initiator proteins, it binds directly to the 5'-end of the 23S rRNA, where it nucleates assembly of the 50S subunit. Its function is as follows. One of the proteins that surrounds the polypeptide exit tunnel on the outside of the subunit. The polypeptide is Large ribosomal subunit protein uL24 (Staphylococcus saprophyticus subsp. saprophyticus (strain ATCC 15305 / DSM 20229 / NCIMB 8711 / NCTC 7292 / S-41)).